The chain runs to 567 residues: Asparagine--tRNA ligase, chloroplastic/mitochondrial (567 aa).

The segment at residues 113 to 191 (NIMGWVRTLR…VELKVEKIIV (79 aa)) is a DNA-binding region (OB).

The protein belongs to the class-II aminoacyl-tRNA synthetase family.

It is found in the plastid. The protein localises to the chloroplast. It localises to the mitochondrion. It catalyses the reaction tRNA(Asn) + L-asparagine + ATP = L-asparaginyl-tRNA(Asn) + AMP + diphosphate + H(+). The chain is Asparagine--tRNA ligase, chloroplastic/mitochondrial from Arabidopsis thaliana (Mouse-ear cress).